The following is a 436-amino-acid chain: MQVSVENTTALERRMSITVPAERIETQVNKRLQQTAQKAKIAGFRPGKVPMSEIKRRFGADARQEAIGDVIQSSFYEAVVEQKLNPAGSPSIEPKSLEAGKDLEYVAVFEVFPEFTVAGFEGITVERLSADVADADLDKMLDILRKQNTRFEVADRAAQNEDQLNIDFVGKVDGEVFAGGSAKGTQLVLGSGRMIPGFEEGLVGAKAGEERVLNLTFPEDYQNLDLAGKTAEFTVTVNTVSEPKLPELNEEFFAQFGIKESGIDGFRTEVRKNMERELRQAIKSKVKNQVMDGLLATNPIEVPKALLSNEVDRLRVQAVQQFGGNIKPDQLPAELFEEQAKRRVVLGLIVAEVVKQFDLKPDEARVREMIQEMASAYQEPEQVVSWYYKNEQQLNEVRSVVLEEQVVDTVLQKASVTDKSVSYEEAVKPVEAPKAD.

Positions 161-246 (EDQLNIDFVG…VNTVSEPKLP (86 aa)) constitute a PPIase FKBP-type domain.

It belongs to the FKBP-type PPIase family. Tig subfamily.

The protein localises to the cytoplasm. The catalysed reaction is [protein]-peptidylproline (omega=180) = [protein]-peptidylproline (omega=0). Its function is as follows. Involved in protein export. Acts as a chaperone by maintaining the newly synthesized protein in an open conformation. Functions as a peptidyl-prolyl cis-trans isomerase. This chain is Trigger factor, found in Pseudomonas fluorescens (strain Pf0-1).